A 1040-amino-acid chain; its full sequence is Multidrug resistance protein MdtB (1040 aa).

The next 12 helical transmembrane spans lie at 16-36 (FIMRPVATTLLMVAILLAGII), 347-367 (LMMAIALVVMIIYLFLRNIPA), 369-389 (IIPGVAVPLSLIGTFAVMVFL), 396-416 (LTLMALTIATGFVVDDAIVVI), 440-460 (IGFTIISLTFSLIAVLIPLLF), 472-492 (FAITLAVAILISAVVSLTLTP), 537-557 (WLTLSVALSTLLLSVLLWVFI), 863-883 (LGSTVWLIVAAVVAMYIVLGI), 888-908 (FIHPITILSTLPTAGVGALLA), 911-931 (IAGSELDVIAIIGIILLIGIV), 968-988 (ILMTTLAALLGALPLMLSTGV), and 998-1018 (IGMVGGLIVSQVLTLFTTPVI).

The protein belongs to the resistance-nodulation-cell division (RND) (TC 2.A.6) family. MdtB subfamily. As to quaternary structure, part of a tripartite efflux system composed of MdtA, MdtB and MdtC. MdtB forms a heteromultimer with MdtC.

It localises to the cell inner membrane. In terms of biological role, the MdtABC tripartite complex confers resistance against novobiocin and deoxycholate. In Escherichia coli (strain 55989 / EAEC), this protein is Multidrug resistance protein MdtB.